A 105-amino-acid chain; its full sequence is MRLFTLILMVVLALVQRQLWFGKNGLVEYRQVSENLLRRQADNQKLQERNMLLKEDIEDLKSGLEAIEELARNDLGFIKSGETFYRVLPRDSAGQNKQSSLPKSD.

The Cytoplasmic segment spans residues 1 to 3; that stretch reads MRL. A helical membrane pass occupies residues 4-21; that stretch reads FTLILMVVLALVQRQLWF. At 22–105 the chain is on the periplasmic side; that stretch reads GKNGLVEYRQ…NKQSSLPKSD (84 aa). A coiled-coil region spans residues 28-74; it reads EYRQVSENLLRRQADNQKLQERNMLLKEDIEDLKSGLEAIEELARND.

Belongs to the FtsB family. In terms of assembly, part of a complex composed of FtsB, FtsL and FtsQ.

The protein localises to the cell inner membrane. Functionally, essential cell division protein. May link together the upstream cell division proteins, which are predominantly cytoplasmic, with the downstream cell division proteins, which are predominantly periplasmic. The sequence is that of Cell division protein FtsB from Tolumonas auensis (strain DSM 9187 / NBRC 110442 / TA 4).